The following is a 433-amino-acid chain: 3-deoxy-D-manno-octulosonic acid transferase (433 aa).

The chain crosses the membrane as a helical; Signal-anchor span at residues 11-31; sequence TFLYDCFLIFAFMVGLPRILY. The active-site Proton acceptor is the E70. CMP contacts are provided by residues 277-278, 317-319, and 344-347; these read PR, IGW, and NLLE.

Belongs to the glycosyltransferase group 1 family. Glycosyltransferase 30 subfamily.

It is found in the cell inner membrane. It catalyses the reaction lipid IVA (E. coli) + CMP-3-deoxy-beta-D-manno-octulosonate = alpha-Kdo-(2-&gt;6)-lipid IVA (E. coli) + CMP + H(+). It carries out the reaction alpha-Kdo-(2-&gt;6)-lipid IVA (E. coli) + CMP-3-deoxy-beta-D-manno-octulosonate = alpha-Kdo-(2-&gt;4)-alpha-Kdo-(2-&gt;6)-lipid IVA (E. coli) + CMP + H(+). The enzyme catalyses alpha-Kdo-(2-&gt;4)-alpha-Kdo-(2-&gt;6)-lipid IVA (E. coli) + CMP-3-deoxy-beta-D-manno-octulosonate = alpha-Kdo-(2-&gt;8)-alpha-Kdo-(2-&gt;4)-alpha-Kdo-(2-&gt;6)-lipid IVA (E. coli) + CMP + H(+). The catalysed reaction is alpha-Kdo-(2-&gt;8)-alpha-Kdo-(2-&gt;4)-alpha-Kdo-(2-&gt;6)-lipid IVA (E. coli) + CMP-3-deoxy-beta-D-manno-octulosonate = alpha-Kdo-(2-&gt;8)-[alpha-Kdo-(2-&gt;4)]-alpha-Kdo-(2-&gt;4)-alpha-Kdo-(2-&gt;6)-lipid IVA + CMP + H(+). Its pathway is bacterial outer membrane biogenesis; LPS core biosynthesis. Functionally, involved in lipopolysaccharide (LPS) biosynthesis. Catalyzes the transfer of predominantly four 3-deoxy-D-manno-octulosonate (Kdo) residues from CMP-Kdo to lipid IV(A), the tetraacyldisaccharide-1,4'-bisphosphate precursor of lipid A. Thus generates the genus-specific LPS epitope of Chlamydia, composed of the trisaccharide alpha-Kdo-(2-&gt;8)-alpha-Kdo-(2-&gt;4)-alpha-Kdo. The chain is 3-deoxy-D-manno-octulosonic acid transferase (waaA) from Chlamydophila psittaci (strain ATCC VR-125 / 6BC) (Chlamydia psittaci).